The following is a 353-amino-acid chain: 4-hydroxy-3-methylbut-2-en-1-yl diphosphate synthase (flavodoxin) (353 aa).

Residues Cys263, Cys266, Cys298, and Glu305 each contribute to the [4Fe-4S] cluster site.

Belongs to the IspG family. Requires [4Fe-4S] cluster as cofactor.

The enzyme catalyses (2E)-4-hydroxy-3-methylbut-2-enyl diphosphate + oxidized [flavodoxin] + H2O + 2 H(+) = 2-C-methyl-D-erythritol 2,4-cyclic diphosphate + reduced [flavodoxin]. The protein operates within isoprenoid biosynthesis; isopentenyl diphosphate biosynthesis via DXP pathway; isopentenyl diphosphate from 1-deoxy-D-xylulose 5-phosphate: step 5/6. Converts 2C-methyl-D-erythritol 2,4-cyclodiphosphate (ME-2,4cPP) into 1-hydroxy-2-methyl-2-(E)-butenyl 4-diphosphate. This is 4-hydroxy-3-methylbut-2-en-1-yl diphosphate synthase (flavodoxin) from Geobacter sulfurreducens (strain ATCC 51573 / DSM 12127 / PCA).